Consider the following 122-residue polypeptide: Ribosome-binding factor A (122 aa).

Belongs to the RbfA family. As to quaternary structure, monomer. Binds 30S ribosomal subunits, but not 50S ribosomal subunits or 70S ribosomes.

It is found in the cytoplasm. Functionally, one of several proteins that assist in the late maturation steps of the functional core of the 30S ribosomal subunit. Associates with free 30S ribosomal subunits (but not with 30S subunits that are part of 70S ribosomes or polysomes). Required for efficient processing of 16S rRNA. May interact with the 5'-terminal helix region of 16S rRNA. The chain is Ribosome-binding factor A from Polaromonas sp. (strain JS666 / ATCC BAA-500).